Consider the following 305-residue polypeptide: Olfactory receptor 4F17 (305 aa).

Topologically, residues 1-18 (MVTEFIFLGLSDSQGLQT) are extracellular. The helical transmembrane segment at 19-42 (FLFMLFFVFYGGIVFGNLLIVITV) threads the bilayer. Residues 43–50 (VSDSHLHS) lie on the Cytoplasmic side of the membrane. A helical membrane pass occupies residues 51-72 (PMYFLLANLSLIDLSLSSVTAP). Topologically, residues 73–93 (KMITDFFSQRKVISFKGCLVQ) are extracellular. Cys-90 and Cys-182 are disulfide-bonded. Residues 94 to 113 (IFLLHFFGGSEMVILIAMGF) traverse the membrane as a helical segment. Topologically, residues 114–132 (DRYIAICKPLHYTTIMCGN) are cytoplasmic. Residues 133–151 (ACVGIMAVAWGIGFLHSVS) form a helical membrane-spanning segment. The Extracellular portion of the chain corresponds to 152–188 (QLAFAVHLPFCGPNEVDSFYCDLPRVIKLACTDTYRL). The helical transmembrane segment at 189–212 (DIMVIANSGVLTVCSFVLLIISYT) threads the bilayer. At 213 to 228 (IILMTIQHRPLDKSSK) the chain is on the cytoplasmic side. Residues 229–251 (ALSTLTAHITVVLLFFGPCVFIY) form a helical membrane-spanning segment. At 252–262 (AWPFPIKSLDK) the chain is on the extracellular side. A helical transmembrane segment spans residues 263–282 (FLAVFYSVITPLLNPIIYTL). The Cytoplasmic segment spans residues 283-305 (RNKDMKTAIRQLRKWDAHSSVKF).

Belongs to the G-protein coupled receptor 1 family.

The protein localises to the cell membrane. Its function is as follows. Odorant receptor. In Homo sapiens (Human), this protein is Olfactory receptor 4F17 (OR4F17).